The following is a 282-amino-acid chain: Non-selective voltage-gated ion channel VDAC2 (282 aa).

Alanine 1 bears the N-acetylalanine mark. The next 19 membrane-spanning stretches (beta stranded) occupy residues 25–34 (LVKLDVKTKS), 38–46 (VEFTTSGTS), 53–63 (VNGSLETKYKW), 68–75 (LTFTEKWN), 79–88 (TLGTEIAIED), 94–103 (LKLTFDTTFS), 110–119 (SGKVKAAYKQ), 122–129 (VNLGCDVD), 136–144 (AIHGSAVVG), 149–157 (LAGYQMTFD), 162–174 (KLTKNNFAVGYKT), 177–184 (FQLHTNVN), 188–197 (EFAGSIYQKV), 201–210 (METAVNLAWT), 217–226 (RFGIAAKYQL), 230–237 (AAISAKVN), 241–250 (LVGVGYTQTL), 253–262 (GVKLTLSALV), and 272–281 (HKLGLGLELE). Residues 241–243 (LVG) and 259–263 (SALVD) contribute to the NAD(+) site.

This sequence belongs to the eukaryotic mitochondrial porin family. As to quaternary structure, monomer, homodimer and higher order oligomers; formation of higher order structures is necessary for scramblase activity. In terms of tissue distribution, expressed in skeletal muscle and oocytes.

It localises to the mitochondrion outer membrane. The protein localises to the membrane. The catalysed reaction is chloride(in) = chloride(out). It catalyses the reaction K(+)(in) = K(+)(out). The enzyme catalyses a 1,2-diacyl-sn-glycero-3-phospho-L-serine(in) = a 1,2-diacyl-sn-glycero-3-phospho-L-serine(out). It carries out the reaction a 1,2-diacyl-sn-glycero-3-phosphocholine(in) = a 1,2-diacyl-sn-glycero-3-phosphocholine(out). The catalysed reaction is a 1,2-diacyl-sn-glycero-3-phospho-(1D-myo-inositol)(in) = a 1,2-diacyl-sn-glycero-3-phospho-(1D-myo-inositol)(out). Its function is as follows. Non-selective voltage-gated ion channel that mediates the transport of anions and cations through the mitochondrion outer membrane and plasma membrane. The channel adopts an open conformation at zero mV and a closed conformation at both positive and negative potentials. There are two populations of channels; the main that functions in a lower open-state conductance with lower ion selectivity, that switch, in a voltage-dependent manner, from the open to a low-conducting 'closed' state and the other that has a normal ion selectivity in the typical high conductance, 'open' state. Functionally, catalyzes the scrambling of phospholipids across the outer mitochondrial membrane; the mechanism is unrelated to channel activity and is capable of translocating both anionic and zwitterionic phospholipids. This Xenopus laevis (African clawed frog) protein is Non-selective voltage-gated ion channel VDAC2.